A 224-amino-acid chain; its full sequence is Phosphoribosylformylglycinamidine synthase subunit PurQ (224 aa).

One can recognise a Glutamine amidotransferase type-1 domain in the interval 3 to 224 (FGVVVFPGSN…GLLEKVVALA (222 aa)). The active-site Nucleophile is the Cys86. Residues His195 and Glu197 contribute to the active site.

Part of the FGAM synthase complex composed of 1 PurL, 1 PurQ and 2 PurS subunits.

Its subcellular location is the cytoplasm. It carries out the reaction N(2)-formyl-N(1)-(5-phospho-beta-D-ribosyl)glycinamide + L-glutamine + ATP + H2O = 2-formamido-N(1)-(5-O-phospho-beta-D-ribosyl)acetamidine + L-glutamate + ADP + phosphate + H(+). It catalyses the reaction L-glutamine + H2O = L-glutamate + NH4(+). It participates in purine metabolism; IMP biosynthesis via de novo pathway; 5-amino-1-(5-phospho-D-ribosyl)imidazole from N(2)-formyl-N(1)-(5-phospho-D-ribosyl)glycinamide: step 1/2. Functionally, part of the phosphoribosylformylglycinamidine synthase complex involved in the purines biosynthetic pathway. Catalyzes the ATP-dependent conversion of formylglycinamide ribonucleotide (FGAR) and glutamine to yield formylglycinamidine ribonucleotide (FGAM) and glutamate. The FGAM synthase complex is composed of three subunits. PurQ produces an ammonia molecule by converting glutamine to glutamate. PurL transfers the ammonia molecule to FGAR to form FGAM in an ATP-dependent manner. PurS interacts with PurQ and PurL and is thought to assist in the transfer of the ammonia molecule from PurQ to PurL. This Nostoc sp. (strain PCC 7120 / SAG 25.82 / UTEX 2576) protein is Phosphoribosylformylglycinamidine synthase subunit PurQ.